Reading from the N-terminus, the 630-residue chain is Protein mono-ADP-ribosyltransferase PARP6 (630 aa).

The residue at position 237 (C237) is an ADP-ribosylcysteine. One can recognise a PARP catalytic domain in the interval 394–620; it reads EMTQGSYLEI…QDPKIQKEIM (227 aa). An ADP-ribosyl aspartic acid modification is found at D600.

This sequence belongs to the ARTD/PARP family. Post-translationally, auto-mono-ADP-ribosylated.

It catalyses the reaction L-aspartyl-[protein] + NAD(+) = 4-O-(ADP-D-ribosyl)-L-aspartyl-[protein] + nicotinamide. The catalysed reaction is L-cysteinyl-[protein] + NAD(+) = S-(ADP-D-ribosyl)-L-cysteinyl-[protein] + nicotinamide + H(+). In terms of biological role, mono-ADP-ribosyltransferase that mediates mono-ADP-ribosylation of target proteins. This chain is Protein mono-ADP-ribosyltransferase PARP6, found in Homo sapiens (Human).